A 260-amino-acid chain; its full sequence is MGRPRPRAAKTWMFLLLLGGAWAGHSRAQEDKVLGGHECQPHSQPWQAALFQGQQLLCGGVLVGGNWVLTAAHCKKPKYTVRLGDHSLQNKDGPEQEIPVVQSIPHPCYNSSDVEDHNHDLMLLQLRDQASLGSKVKPISLADHCTQPGQKCTVSGWGTVTSPRENFPDTLNCAEVKIFPQKKCEDAYPGQITDGMVCAGSSKGADTCQGDSGGPLVCDGALQGITSWGSDPCGRSDKPGVYTNICRYLDWIKKIIGSKG.

The N-terminal stretch at 1–28 (MGRPRPRAAKTWMFLLLLGGAWAGHSRA) is a signal peptide. Residues 29–32 (QEDK) constitute a propeptide that is removed on maturation. Residues 33 to 257 (VLGGHECQPH…YLDWIKKIIG (225 aa)) enclose the Peptidase S1 domain. 6 disulfide bridges follow: C39–C173, C58–C74, C145–C246, C152–C218, C184–C198, and C208–C233. H73 (charge relay system) is an active-site residue. Residue N110 is glycosylated (N-linked (GlcNAc...) asparagine). The active-site Charge relay system is the D120. S212 acts as the Charge relay system in catalysis.

It belongs to the peptidase S1 family. Kallikrein subfamily. In terms of assembly, interacts with SPINK9. Isoform 1 is predominantly expressed in the pancreas. Isoform 2 is expressed in adult brain and hippocampus. Isoform 1 and isoform 2 are found in fetal brain and placenta. Detected in salivary gland, uterus, thymus, breast, testis and kidney but not in spleen, liver, lung or normal ovarian tissue. Displays an 11.5-fold increase in Alzheimer disease hippocampus compared to controls and is overexpressed in some ovarian carcinomas. Expressed at low levels in normal skin while high levels are found in psoriasis vulgaris, seborrheic keratosis, lichen planus and squamous cell carcinoma skin samples. Expressed in the keratinocytes.

It localises to the secreted. It is found in the cytoplasm. The catalysed reaction is Cleavage of amide substrates following the basic amino acids Arg or Lys at the P1 position, with a preference for Arg over Lys.. Its activity is regulated as follows. Inhibited by a range of serine protease inhibitors including antipain, aprotinin, leupeptin, benzamidine and soybean trypsin inhibitor. In terms of biological role, serine protease which is capable of degrading a number of proteins such as casein, fibrinogen, kininogen, fibronectin and collagen type IV. Also cleaves L1CAM in response to increased neural activity. Induces neurite outgrowth and fasciculation of cultured hippocampal neurons. Plays a role in the formation and maturation of orphan and small synaptic boutons in the Schaffer-collateral pathway, regulates Schaffer-collateral long-term potentiation in the hippocampus and is required for memory acquisition and synaptic plasticity. Involved in skin desquamation and keratinocyte proliferation. Plays a role in the secondary phase of pathogenesis following spinal cord injury. This chain is Kallikrein-8 (KLK8), found in Homo sapiens (Human).